Consider the following 636-residue polypeptide: Chaperone protein HtpG (636 aa).

The a; substrate-binding stretch occupies residues 1-349; the sequence is MAKHQFQTEV…SEDLPLNVSR (349 aa). The segment at 350 to 562 is b; sequence EILQENRILA…ADAQMAAMAH (213 aa). A c region spans residues 563–636; the sequence is MFRAMGQAMP…RLSRITAKAL (74 aa).

The protein belongs to the heat shock protein 90 family. As to quaternary structure, homodimer.

Its subcellular location is the cytoplasm. Molecular chaperone. Has ATPase activity. In Aliarcobacter butzleri (strain RM4018) (Arcobacter butzleri), this protein is Chaperone protein HtpG.